The primary structure comprises 144 residues: Granulocyte-macrophage colony-stimulating factor (144 aa).

Residues 1 to 17 (MWLQNLLFLGTVVCSIS) form the signal peptide. O-linked (GalNAc...) serine glycosylation occurs at S22. O-linked (GalNAc...) threonine glycosylation is present at T27. N-linked (GlcNAc...) asparagine glycosylation occurs at N44. 2 cysteine pairs are disulfide-bonded: C71–C113 and C105–C138.

It belongs to the GM-CSF family. In terms of assembly, monomer. The signaling GM-CSF receptor complex is a dodecamer of two head-to-head hexamers of two alpha, two beta, and two ligand subunits.

It localises to the secreted. Cytokine that stimulates the growth and differentiation of hematopoietic precursor cells from various lineages, including granulocytes, macrophages, eosinophils and erythrocytes. In Canis lupus familiaris (Dog), this protein is Granulocyte-macrophage colony-stimulating factor (CSF2).